The chain runs to 62 residues: Defensin BmKDfsin3 (62 aa).

Residues 1–24 (MKTIVILFVLALVFCTLEMGMVEA) form the signal peptide. Intrachain disulfides connect C28–C49, C35–C57, and C39–C59.

It belongs to the invertebrate defensin family. Type 2 subfamily. As to expression, low expression in both venom and non-venom glands (hemolymph).

Its subcellular location is the secreted. Functionally, antibacterial peptide active against Gram-positive bacteria (including S.aureus ATCC25923 (MIC=2.5 uM), M.luteus AB93113 (MIC=2.5 uM), and the antibiotic-resistant S.epidermidis PRSE P1389 (MIC=1.25 uM)), but not against Gram-negative bacteria (including E.coli and P.aeruginosa). Also blocks the currents of Kv1.1/KCNA1 (57% inhibition), Kv1.2/KCNA2 (27.5% inhibition), Kv1.3/KCNA3 (IC(50)=23.4 nM, 84.3% inhibition), KCa3.1/KCNN4/IK (15% inhibition), KCa2.3/KCNN3/SK3 (87.5% inhibition) and Kv11.1/KCNH2/ERG1 (30.4% inhibition) channels (tested at 1 uM). It inhibits potassium channel current by interacting with the pore region. This Olivierus martensii (Manchurian scorpion) protein is Defensin BmKDfsin3.